A 693-amino-acid polypeptide reads, in one-letter code: Polyribonucleotide nucleotidyltransferase (693 aa).

Residues Asp489 and Asp495 each coordinate Mg(2+). The KH domain occupies 556–615 (PQIHVMNINPAKIKDVVGRGGATVKGIVEKTGAQIDTSDSGEVKVFAKDKKSMDMAVAMI). The S1 motif domain maps to 625–693 (GQVYKGKIVK…GRVKLSLVAR (69 aa)).

The protein belongs to the polyribonucleotide nucleotidyltransferase family. In terms of assembly, component of the RNA degradosome, which is a multiprotein complex involved in RNA processing and mRNA degradation. The cofactor is Mg(2+).

The protein localises to the cytoplasm. The enzyme catalyses RNA(n+1) + phosphate = RNA(n) + a ribonucleoside 5'-diphosphate. Functionally, involved in mRNA degradation. Catalyzes the phosphorolysis of single-stranded polyribonucleotides processively in the 3'- to 5'-direction. The protein is Polyribonucleotide nucleotidyltransferase of Francisella tularensis subsp. holarctica (strain FTNF002-00 / FTA).